The primary structure comprises 169 residues: N-alpha-acetyltransferase 50 (169 aa).

The 150-residue stretch at 6-155 (IELGDVTPHN…DAHVLQKNLK (150 aa)) folds into the N-acetyltransferase domain. Position 12 is a phosphothreonine (Thr-12). Tyr-31 is a binding site for substrate. N6-acetyllysine is present on residues Lys-34 and Lys-37. Tyr-73 is a catalytic residue. Met-75 is a binding site for substrate. 77–90 (LGCLAPYRRLGIGT) provides a ligand contact to acetyl-CoA. The residue at position 110 (Tyr-110) is a Phosphotyrosine. His-112 is a catalytic residue. Residue 117–126 (NESAIDFYRK) participates in CoA binding. Residues 138-141 (YYKR) form a substrate region. Lys-140 carries the post-translational modification N6-acetyllysine.

This sequence belongs to the acetyltransferase family. GNAT subfamily. As to quaternary structure, component of the N-terminal acetyltransferase E (NatE) complex at least composed of NAA10, NAA15 and NAA50. Interacts with NAA10. Interacts with NAA15. Predominantly interacts with NAA15 in the N-terminal acetyltransferase A complex (NatA complex); the interactions reduce the acetylation activity of the NatA complex. Component of the N-terminal acetyltransferase E (NatE)/HYPK complex at least composed of NAA10, NAA15, NAA50 and HYPK. Within the complex interacts with NAA15. Its capacity to interact with the NatA complex is reduced by HYPK. Interacts with NAA35.

The protein resides in the cytoplasm. The protein localises to the nucleus. It catalyses the reaction N-terminal L-methionyl-L-alanyl-[protein] + acetyl-CoA = N-terminal N(alpha)-acetyl-L-methionyl-L-alanyl-[protein] + CoA + H(+). The enzyme catalyses N-terminal L-methionyl-L-seryl-[protein] + acetyl-CoA = N-terminal N(alpha)-acetyl-L-methionyl-L-seryl-[protein] + CoA + H(+). The catalysed reaction is N-terminal L-methionyl-L-valyl-[protein] + acetyl-CoA = N-terminal N(alpha)-acetyl-L-methionyl-L-valyl-[protein] + CoA + H(+). It carries out the reaction N-terminal L-methionyl-L-threonyl-[protein] + acetyl-CoA = N-terminal N(alpha)-acetyl-L-methionyl-L-threonyl-[protein] + CoA + H(+). It catalyses the reaction N-terminal L-methionyl-L-lysyl-[protein] + acetyl-CoA = N-terminal N(alpha)-acetyl-L-methionyl-L-lysyl-[protein] + CoA + H(+). The enzyme catalyses N-terminal L-methionyl-L-leucyl-[protein] + acetyl-CoA = N-terminal N(alpha)-acetyl-L-methionyl-L-leucyl-[protein] + CoA + H(+). The catalysed reaction is N-terminal L-methionyl-L-phenylalanyl-[protein] + acetyl-CoA = N-terminal N(alpha)-acetyl-L-methionyl-L-phenylalanyl-[protein] + CoA + H(+). It carries out the reaction N-terminal L-methionyl-L-tyrosyl-[protein] + acetyl-CoA = N-terminal N(alpha)-acetyl-L-methionyl-L-tyrosyl-[protein] + CoA + H(+). In terms of biological role, N-alpha-acetyltransferase that acetylates the N-terminus of proteins that retain their initiating methionine. Has a broad substrate specificity: able to acetylate the initiator methionine of most peptides, except for those with a proline in second position. Also displays N-epsilon-acetyltransferase activity by mediating acetylation of the side chain of specific lysines on proteins. Autoacetylates in vivo. The relevance of N-epsilon-acetyltransferase activity is however unclear: able to acetylate H4 in vitro, but this result has not been confirmed in vivo. Component of N-alpha-acetyltransferase complexes containing NAA10 and NAA15, which has N-alpha-acetyltransferase activity. Does not influence the acetyltransferase activity of NAA10. However, it negatively regulates the N-alpha-acetyltransferase activity of the N-terminal acetyltransferase A complex (also called the NatA complex). The multiprotein complexes probably constitute the major contributor for N-terminal acetylation at the ribosome exit tunnel, with NAA10 acetylating all amino termini that are devoid of methionine and NAA50 acetylating other peptides. Required for sister chromatid cohesion during mitosis by promoting binding of CDCA5/sororin to cohesin: may act by counteracting the function of NAA10. The polypeptide is N-alpha-acetyltransferase 50 (Mus musculus (Mouse)).